Here is a 379-residue protein sequence, read N- to C-terminus: Cobalt-precorrin-5B C(1)-methyltransferase (379 aa).

The protein belongs to the CbiD family.

The enzyme catalyses Co-precorrin-5B + S-adenosyl-L-methionine = Co-precorrin-6A + S-adenosyl-L-homocysteine. It participates in cofactor biosynthesis; adenosylcobalamin biosynthesis; cob(II)yrinate a,c-diamide from sirohydrochlorin (anaerobic route): step 6/10. Catalyzes the methylation of C-1 in cobalt-precorrin-5B to form cobalt-precorrin-6A. This Salmonella arizonae (strain ATCC BAA-731 / CDC346-86 / RSK2980) protein is Cobalt-precorrin-5B C(1)-methyltransferase.